Reading from the N-terminus, the 339-residue chain is Phenylalanine--tRNA ligase alpha subunit (339 aa).

Residue Glu-253 coordinates Mg(2+).

Belongs to the class-II aminoacyl-tRNA synthetase family. Phe-tRNA synthetase alpha subunit type 1 subfamily. As to quaternary structure, tetramer of two alpha and two beta subunits. Mg(2+) is required as a cofactor.

It localises to the cytoplasm. It carries out the reaction tRNA(Phe) + L-phenylalanine + ATP = L-phenylalanyl-tRNA(Phe) + AMP + diphosphate + H(+). This is Phenylalanine--tRNA ligase alpha subunit from Thioalkalivibrio sulfidiphilus (strain HL-EbGR7).